A 599-amino-acid polypeptide reads, in one-letter code: Afamin (599 aa).

The signal sequence occupies residues 1–21 (MKLLKLTGFIFFLFFLTESLT). 3 Albumin domains span residues 22–210 (LPTQ…IPVT), 211–403 (QYLK…KFNE), and 404–599 (TTEK…KIGN). Asn33 carries N-linked (GlcNAc...) (complex) asparagine glycosylation. Cystine bridges form between Cys77-Cys86, Cys99-Cys114, Cys113-Cys124, Cys148-Cys193, Cys192-Cys201, Cys224-Cys270, Cys269-Cys277, Cys289-Cys303, Cys302-Cys313, Cys340-Cys385, and Cys384-Cys393. Asn109 is a glycosylation site (N-linked (GlcNAc...) (complex) asparagine). Positions 215–319 (AFSSYQKHVC…RGQCIINSNK (105 aa)) are binding pocket for hydrophobic ligands. The N-linked (GlcNAc...) (complex) asparagine; atypical glycan is linked to Asn383. Asn402 carries N-linked (GlcNAc...) (complex) asparagine glycosylation. 6 disulfides stabilise this stretch: Cys416/Cys462, Cys461/Cys470, Cys483/Cys499, Cys498/Cys509, Cys536/Cys581, and Cys580/Cys589. Asn488 carries N-linked (GlcNAc...) asparagine glycosylation.

Belongs to the ALB/AFP/VDB family. Forms a 1:1 complex with Wnt family members; interacts with WNT1, WNT2B, WNT3, WNT3A, WNT5A, WNT7A, WNT7B, WNT8, WNT9A, WNT9B, WNT10A and WNT10B. In terms of processing, N-glycosylated; more than 90% of the glycans are sialylated. High level detected in plasma but also in extravascular fluids such as follicular and cerebrospinal fluids (at protein level).

Its subcellular location is the secreted. Functions as a carrier for hydrophobic molecules in body fluids. Essential for the solubility and activity of lipidated Wnt family members, including WNT1, WNT2B, WNT3, WNT3A, WNT5A, WNT7A, WNT7B, WNT8, WNT9A, WNT9B, WNT10A and WNT10B. Binds vitamin E. May transport vitamin E in body fluids under conditions where the lipoprotein system is not sufficient. May be involved in the transport of vitamin E across the blood-brain barrier. The protein is Afamin (AFM) of Homo sapiens (Human).